The sequence spans 340 residues: Terpene synthase 29 (340 aa).

Positions 132, 197, 257, 261, and 265 each coordinate Mg(2+). A DDXXXXD motif motif is present at residues 132–138; it reads DEPDILE. The short motif at 257–265 is the NSE/DTE motif element; sequence NDILSFYKE.

It belongs to the trichodiene synthase family. Mg(2+) serves as cofactor.

Functionally, terpene cyclase that catalyzes the cyclization of farnesyl diphosphate (FPP) to a single major terpene scaffold whose chemical structure is still unknown. This chain is Terpene synthase 29, found in Postia placenta (strain ATCC 44394 / Madison 698-R) (Brown rot fungus).